A 77-amino-acid chain; its full sequence is Probable Fe(2+)-trafficking protein (77 aa).

Belongs to the Fe(2+)-trafficking protein family. Monomer.

Its function is as follows. Could be a mediator in iron transactions between iron acquisition and iron-requiring processes, such as synthesis and/or repair of Fe-S clusters in biosynthetic enzymes. The chain is Probable Fe(2+)-trafficking protein from Buchnera aphidicola subsp. Acyrthosiphon pisum (strain APS) (Acyrthosiphon pisum symbiotic bacterium).